The following is a 142-amino-acid chain: Large ribosomal subunit protein uL11 (142 aa).

Belongs to the universal ribosomal protein uL11 family. In terms of assembly, part of the ribosomal stalk of the 50S ribosomal subunit. Interacts with L10 and the large rRNA to form the base of the stalk. L10 forms an elongated spine to which L12 dimers bind in a sequential fashion forming a multimeric L10(L12)X complex. One or more lysine residues are methylated.

In terms of biological role, forms part of the ribosomal stalk which helps the ribosome interact with GTP-bound translation factors. The chain is Large ribosomal subunit protein uL11 from Thermobifida fusca (strain YX).